Reading from the N-terminus, the 123-residue chain is Large ribosomal subunit protein bL19c (123 aa).

Belongs to the bacterial ribosomal protein bL19 family.

It is found in the plastid. It localises to the chloroplast. This chain is Large ribosomal subunit protein bL19c, found in Pyropia yezoensis (Susabi-nori).